The sequence spans 355 residues: UDP-N-acetylglucosamine--N-acetylmuramyl-(pentapeptide) pyrophosphoryl-undecaprenol N-acetylglucosamine transferase (355 aa).

UDP-N-acetyl-alpha-D-glucosamine-binding positions include 15-17 (TGG), N127, R163, S191, I244, 263-268 (ALTVSE), and Q288.

It belongs to the glycosyltransferase 28 family. MurG subfamily.

It is found in the cell inner membrane. The catalysed reaction is di-trans,octa-cis-undecaprenyl diphospho-N-acetyl-alpha-D-muramoyl-L-alanyl-D-glutamyl-meso-2,6-diaminopimeloyl-D-alanyl-D-alanine + UDP-N-acetyl-alpha-D-glucosamine = di-trans,octa-cis-undecaprenyl diphospho-[N-acetyl-alpha-D-glucosaminyl-(1-&gt;4)]-N-acetyl-alpha-D-muramoyl-L-alanyl-D-glutamyl-meso-2,6-diaminopimeloyl-D-alanyl-D-alanine + UDP + H(+). It functions in the pathway cell wall biogenesis; peptidoglycan biosynthesis. In terms of biological role, cell wall formation. Catalyzes the transfer of a GlcNAc subunit on undecaprenyl-pyrophosphoryl-MurNAc-pentapeptide (lipid intermediate I) to form undecaprenyl-pyrophosphoryl-MurNAc-(pentapeptide)GlcNAc (lipid intermediate II). This chain is UDP-N-acetylglucosamine--N-acetylmuramyl-(pentapeptide) pyrophosphoryl-undecaprenol N-acetylglucosamine transferase, found in Salmonella typhi.